Here is a 397-residue protein sequence, read N- to C-terminus: Methylthioribose kinase (397 aa).

ATP contacts are provided by residues asparagine 44, lysine 61, and 115-117 (EDL). Aspartate 233 contacts substrate. 250–252 (DPE) provides a ligand contact to ATP. Residue arginine 340 coordinates substrate.

It belongs to the methylthioribose kinase family. Homodimer.

The enzyme catalyses 5-(methylsulfanyl)-D-ribose + ATP = 5-(methylsulfanyl)-alpha-D-ribose 1-phosphate + ADP + H(+). It functions in the pathway amino-acid biosynthesis; L-methionine biosynthesis via salvage pathway; S-methyl-5-thio-alpha-D-ribose 1-phosphate from S-methyl-5'-thioadenosine (hydrolase route): step 2/2. Functionally, catalyzes the phosphorylation of methylthioribose into methylthioribose-1-phosphate. The chain is Methylthioribose kinase (mtnK) from Bacillus subtilis (strain 168).